Reading from the N-terminus, the 413-residue chain is RNA-binding protein 41 (413 aa).

The interval 225-247 is disordered; that stretch reads SGSGTAEKPSLLQDKGKQAAQGK. Residues 309–387 form the RRM domain; it reads KVLYLKNLSP…KILVIEFAKS (79 aa).

Its function is as follows. May bind RNA. This is RNA-binding protein 41 (Rbm41) from Mus musculus (Mouse).